The primary structure comprises 198 residues: Ribonuclease HII (198 aa).

One can recognise an RNase H type-2 domain in the interval 10 to 198; that stretch reads QLVAGVDEVG…PVKRALGLAS (189 aa). The a divalent metal cation site is built by Asp-16, Glu-17, and Asp-108.

It belongs to the RNase HII family. Mn(2+) serves as cofactor. It depends on Mg(2+) as a cofactor.

It is found in the cytoplasm. The enzyme catalyses Endonucleolytic cleavage to 5'-phosphomonoester.. In terms of biological role, endonuclease that specifically degrades the RNA of RNA-DNA hybrids. The polypeptide is Ribonuclease HII (Shigella sonnei (strain Ss046)).